The sequence spans 161 residues: Probable endopeptidase HI_1314 (161 aa).

The signal sequence occupies residues 1–18 (MKVYKSFLIATASLFLFA). Cys19 carries the N-palmitoyl cysteine lipid modification. Cys19 carries the S-diacylglycerol cysteine lipid modification. The 123-residue stretch at 39-161 (IMAIAMLSEQ…SKAFWQVRRI (123 aa)) folds into the NlpC/P60 domain. Cys69 (nucleophile) is an active-site residue. His122 (proton acceptor) is an active-site residue. His134 is an active-site residue.

It belongs to the peptidase C40 family.

Its subcellular location is the cell membrane. This Haemophilus influenzae (strain ATCC 51907 / DSM 11121 / KW20 / Rd) protein is Probable endopeptidase HI_1314.